An 858-amino-acid polypeptide reads, in one-letter code: MSAHAAPSPEALSRRAEFKAAKTEMLERFRHAANVASLMHALSKLTDDALKRVWDECGLPATLALVAVGGYGRGELAPYSDVDIVVLLPDAHDAALDARIERFIGMAWDLGLEIGSSVRTVAQCIEEASQDVTVQTSLLEARRIVGSTALFERFTVRYHEALDARAFFTAKVLEMRQRHAKFQDTPYSLEPNVKESPGGLRDLQTILWIARAAGFGSSWRELDTRGLITDREARELRRNEGFLKTLRARLHVIAGRRQDMLVFDLQTQAAESFGYQPTQAKRASEQLMRRYYWAAKAVTQLATILIQNIEAQLFPATSGITRVLSADRFVEKQGMLEIVDDGVFERHPDAILEAFLLYETTRGVKGLSARTLRALYNSREIMNNAWRRDPQNRATFMRILQQPEGITHAFRLMNQTSVLGRYLLNFRRIVGQMQHDLYHVYTVDQHILMVLRNIRRFAVAEHAHEYPFCSQLIGNFERPWALYVAALFHDIAKGRGGDHSTLGMADARRFCREHGIAGDDAALIVWLVQHHLTMSQVAQKQDTSDPEVIKRFAEVVGNERYLTALYLLTVADIRGTSPKVWNTWKGKLLEDLYRITLAVLGGANPDAHSELKSRQEQALALLRLETVPDDAHRALWDQLDVGFFLRHDAADIAWQTRVLYRHVNAETAIVRARPSPIGDALQVLVYVKDRPDLFAGICAYFDRNGLSVLDARVSTTRHGYALDNFIVTQTERDVRYRDIANLVEQQLATRLAETASLPEPSKGRLSRLSRTFPITPRVDLRADERGQYYILSVSANDRPGLLYSIARVLAEHRIGVHAARINTLGERVEDIFLLAGAGLSDNRLQIQLETELLRAIAV.

A uridylyltransferase region spans residues 1-324 (MSAHAAPSPE…PATSGITRVL (324 aa)). The segment at 325 to 681 (SADRFVEKQG…ARPSPIGDAL (357 aa)) is uridylyl-removing. Residues 443–565 (VDQHILMVLR…VGNERYLTAL (123 aa)) enclose the HD domain. ACT domains are found at residues 682-763 (QVLV…PSKG) and 790-858 (ILSV…AIAV).

It belongs to the GlnD family. It depends on Mg(2+) as a cofactor.

The catalysed reaction is [protein-PII]-L-tyrosine + UTP = [protein-PII]-uridylyl-L-tyrosine + diphosphate. The enzyme catalyses [protein-PII]-uridylyl-L-tyrosine + H2O = [protein-PII]-L-tyrosine + UMP + H(+). With respect to regulation, uridylyltransferase (UTase) activity is inhibited by glutamine, while glutamine activates uridylyl-removing (UR) activity. Its function is as follows. Modifies, by uridylylation and deuridylylation, the PII regulatory proteins (GlnB and homologs), in response to the nitrogen status of the cell that GlnD senses through the glutamine level. Under low glutamine levels, catalyzes the conversion of the PII proteins and UTP to PII-UMP and PPi, while under higher glutamine levels, GlnD hydrolyzes PII-UMP to PII and UMP (deuridylylation). Thus, controls uridylylation state and activity of the PII proteins, and plays an important role in the regulation of nitrogen assimilation and metabolism. This Burkholderia orbicola (strain MC0-3) protein is Bifunctional uridylyltransferase/uridylyl-removing enzyme.